The sequence spans 111 residues: PCNA-associated factor (111 aa).

A compositionally biased stretch (polar residues) spans 1–10; it reads MVRTKANSVP. The interval 1-111 is disordered; sequence MVRTKANSVP…PPDHTDDEKE (111 aa). Serine 8 carries the post-translational modification Phosphoserine. Lysine 15 participates in a covalent cross-link: Glycyl lysine isopeptide (Lys-Gly) (interchain with G-Cter in ubiquitin). A D-box motif is present at residues 23 to 34; that stretch reads RKVLGSSTSAAN. Lysine 24 carries the N6-acetyllysine; alternate modification. Lysine 24 participates in a covalent cross-link: Glycyl lysine isopeptide (Lys-Gly) (interchain with G-Cter in ubiquitin); alternate. The span at 27 to 39 shows a compositional bias: polar residues; the sequence is GSSTSAANSTPLS. 3 positions are modified to phosphoserine: serine 28, serine 31, and serine 72. The PIP-box signature appears at 62–72; sequence QKGIGEFFSLS. The span at 74–84 shows a compositional bias: basic and acidic residues; it reads KDSEKENRIPE. Positions 78 to 80 match the KEN box motif; that stretch reads KEN. The short motif at 85 to 97 is the Initiation motif element; the sequence is EAGSSGLGKAKRK.

Interacts (when monoubiquitinated at Lys-15 and Lys-24) with PCNA. Interacts with isoform 2/p33ING1b of ING1. Interacts with BRCA1. Post-translationally, monoubiquitinated at Lys-15 and Lys-24 during normal S phase, promoting its association with PCNA. Also diubiquitinated at these 2 sites. Following DNA damage, monoubiquitin chains at Lys-15 and Lys-24 are probably extended, leading to disrupt the interaction with PCNA. Polyubiquitinated by the APC/C complex at the mitotic exit, leading to its degradation by the proteasome.

It localises to the nucleus. It is found in the cytoplasm. Its subcellular location is the perinuclear region. In terms of biological role, PCNA-binding protein that acts as a regulator of DNA repair during DNA replication. Following DNA damage, the interaction with PCNA is disrupted, facilitating the interaction between monoubiquitinated PCNA and the translesion DNA synthesis DNA polymerase eta (POLH) at stalled replisomes, facilitating the bypass of replication-fork-blocking lesions. Also acts as a regulator of centrosome number. This chain is PCNA-associated factor, found in Bos taurus (Bovine).